The sequence spans 141 residues: MSVGKAKGAQKTVQKGIHNKVARKVRTSTTFRRPKTLELARKPKYARKSVPHASRLDEYKIIVNPINSESAMKKIEDDNTLVFHVHLKANKFTIKNAVKKLYSVDAVKINTLIRPNGTKKAFVKLSADADALDVANRIGFL.

Residues 1–22 (MSVGKAKGAQKTVQKGIHNKVA) are disordered.

It belongs to the universal ribosomal protein uL23 family. In terms of assembly, component of the large ribosomal subunit (LSU). Mature yeast ribosomes consist of a small (40S) and a large (60S) subunit. The 40S small subunit contains 1 molecule of ribosomal RNA (18S rRNA) and at least 33 different proteins. The large 60S subunit contains 3 rRNA molecules (25S, 5.8S and 5S rRNA) and at least 46 different proteins. uL23 is associated with the polypeptide exit tunnel.

It localises to the cytoplasm. In terms of biological role, this protein binds to a specific region on the 26S rRNA. Its function is as follows. Component of the ribosome, a large ribonucleoprotein complex responsible for the synthesis of proteins in the cell. The small ribosomal subunit (SSU) binds messenger RNAs (mRNAs) and translates the encoded message by selecting cognate aminoacyl-transfer RNA (tRNA) molecules. The large subunit (LSU) contains the ribosomal catalytic site termed the peptidyl transferase center (PTC), which catalyzes the formation of peptide bonds, thereby polymerizing the amino acids delivered by tRNAs into a polypeptide chain. The nascent polypeptides leave the ribosome through a tunnel in the LSU and interact with protein factors that function in enzymatic processing, targeting, and the membrane insertion of nascent chains at the exit of the ribosomal tunnel. uL23 is a major component of the universal docking site for these factors at the polypeptide exit tunnel. The sequence is that of Large ribosomal subunit protein uL23B (rpl2502) from Schizosaccharomyces pombe (strain 972 / ATCC 24843) (Fission yeast).